Here is a 237-residue protein sequence, read N- to C-terminus: H/ACA ribonucleoprotein complex subunit 1 (237 aa).

2 stretches are compositionally biased toward gly residues: residues 1 to 59 (MGFG…GGRG) and 172 to 237 (RGGG…RGRW). Disordered stretches follow at residues 1-64 (MGFG…FDTG) and 157-237 (KPPQ…RGRW). 2 RGG-box regions span residues 4–56 (GKPR…GRGG) and 166–236 (KAFT…GRGR).

It belongs to the GAR1 family. Component of the box H/ACA small nucleolar ribonucleoprotein (H/ACA snoRNP) complex consisting of Nop60B, Gar1, NPH2 and Nop10, and associated with H/ACA-type snoRNAs.

Its subcellular location is the nucleus. The protein resides in the nucleolus. Component of the box H/ACA small nucleolar ribonucleoprotein (H/ACA snoRNP) complex, which catalyzes pseudouridylation of rRNA. This involves the isomerization of uridine such that the ribose is subsequently attached to C5, instead of the normal N1. Pseudouridine ('psi') residues may serve to stabilize the conformation of rRNAs. Required for ribosome biogenesis. H/ACA snoRNP complex-dependent ribosome biogenesis is important in female germline cell differentiation during oogenesis. The chain is H/ACA ribonucleoprotein complex subunit 1 from Drosophila melanogaster (Fruit fly).